The chain runs to 471 residues: Mannose-1-phosphate guanylyltransferase (471 aa).

This sequence belongs to the mannose-6-phosphate isomerase type 2 family.

The catalysed reaction is alpha-D-mannose 1-phosphate + GTP + H(+) = GDP-alpha-D-mannose + diphosphate. It functions in the pathway nucleotide-sugar biosynthesis; GDP-alpha-D-mannose biosynthesis; GDP-alpha-D-mannose from alpha-D-mannose 1-phosphate (GTP route): step 1/1. Functionally, involved in GDP-mannose biosynthesis which serves as the activated sugar nucleotide precursor for mannose residues in cell surface polysaccharides. This enzyme participates in synthesis of the LPS O antigen. This is Mannose-1-phosphate guanylyltransferase (manC) from Salmonella montevideo.